The chain runs to 683 residues: Rhophilin-2-B (683 aa).

In terms of domain architecture, REM-1 spans 25–99 (KSIAQTGRSK…LERLNISVEV (75 aa)). Positions 110–501 (PLIPLGLKET…TDIFQRLGPL (392 aa)) constitute a BRO1 domain. One can recognise a PDZ domain in the interval 515-592 (KMCITKEDGD…DSIEIQVISI (78 aa)).

This sequence belongs to the RHPN family. As to quaternary structure, interacts with RhoA.

It is found in the cytoplasm. The protein localises to the perinuclear region. Binds specifically to GTP-Rho. The sequence is that of Rhophilin-2-B (rhpn2-b) from Xenopus laevis (African clawed frog).